The following is a 385-amino-acid chain: Cellulase CelDZ1 (385 aa).

The chain crosses the membrane as a helical span at residues 6-26 (INKWYFFVGMLVIFAVIISLI). Substrate contacts are provided by residues His-87, 91–92 (WF), Tyr-118, and His-153. Glu-192 serves as the catalytic Proton donor. Tyr-261 is a substrate binding site. Residue Glu-294 is the Nucleophile of the active site. Substrate is bound by residues 300-301 (AS), Trp-328, and 333-335 (KNE).

It belongs to the glycosyl hydrolase 5 (cellulase A) family. As to quaternary structure, monomer.

It localises to the cell membrane. It catalyses the reaction Endohydrolysis of (1-&gt;4)-beta-D-glucosidic linkages in cellulose, lichenin and cereal beta-D-glucans.. Activity is enhanced by 1mM Mn(2+), but is not affected by 1mM Ca(2+), Mg(2+), Zn(2+), K(+), Na(+) or Li(+). Activity is not inhibited by EDTA (in vitro). In terms of biological role, thermostable endoglucanase that has high activity with soluble polymeric substrates containing beta-1,4-glycosidic bonds, such as carboxymethyl cellulose (CMC) and barley beta-D-glucan (in vitro). Has no activity with cellobiose and filter paper. Has no activity with substrates containing beta-1,3-linked glycans, such as laminarin. Likewise, lacks activity with xylan, galactomannan and pectin. This Thermoanaerobacterium sp protein is Cellulase CelDZ1.